An 82-amino-acid polypeptide reads, in one-letter code: Small ribosomal subunit protein eS21z (82 aa).

Met1 is modified (N-acetylmethionine).

It belongs to the eukaryotic ribosomal protein eS21 family.

The sequence is that of Small ribosomal subunit protein eS21z (RPS21B) from Arabidopsis thaliana (Mouse-ear cress).